The chain runs to 644 residues: Exoribonuclease 2 (644 aa).

The region spanning 189-516 (REDLTALDFV…NHRLLKAVIK (328 aa)) is the RNB domain. One can recognise an S1 motif domain in the interval 561–643 (DTRFAAEIVD…ETRSIIARPV (83 aa)).

Belongs to the RNR ribonuclease family. RNase II subfamily.

The protein resides in the cytoplasm. It carries out the reaction Exonucleolytic cleavage in the 3'- to 5'-direction to yield nucleoside 5'-phosphates.. Functionally, involved in mRNA degradation. Hydrolyzes single-stranded polyribonucleotides processively in the 3' to 5' direction. The polypeptide is Exoribonuclease 2 (Shigella boydii serotype 18 (strain CDC 3083-94 / BS512)).